We begin with the raw amino-acid sequence, 712 residues long: Effector protein HopM1 (712 aa).

Residues 22 to 58 (DTVPAQTAHPNAVTAGMNPPLTPDQSGSHATESSSAG) form a disordered region. Polar residues predominate over residues 44 to 57 (PDQSGSHATESSSA).

As to quaternary structure, interacts with the chaperone ShcM. Interacts with host plant BIG5/ATMIN7.

The protein localises to the secreted. The protein resides in the host membrane. Its function is as follows. Involved in the suppression of basal resistance and promotion of disease symptoms in plants. Mediates the ubiquitination and degradation, via the host proteasome, of a low-abundance immunity-associated protein in Arabidopsis thaliana. May be involved in the inhibition of a host vesicle trafficking pathway. In Pseudomonas syringae pv. tomato (strain ATCC BAA-871 / DC3000), this protein is Effector protein HopM1 (hopM1).